Here is a 70-residue protein sequence, read N- to C-terminus: DNA-directed RNA polymerase subunit epsilon (70 aa).

Belongs to the RNA polymerase subunit epsilon family. RNAP is composed of a core of 2 alpha, a beta and a beta' subunit. The core is associated with a delta subunit, and at least one of epsilon or omega. When a sigma factor is associated with the core the holoenzyme is formed, which can initiate transcription.

It catalyses the reaction RNA(n) + a ribonucleoside 5'-triphosphate = RNA(n+1) + diphosphate. Its function is as follows. A non-essential component of RNA polymerase (RNAP). This is DNA-directed RNA polymerase subunit epsilon from Bacillus cereus (strain ZK / E33L).